We begin with the raw amino-acid sequence, 193 residues long: Dual-action ribosomal maturation protein DarP (193 aa).

The segment covering 1–10 (MRGRDEETGE) has biased composition (basic and acidic residues). Disordered stretches follow at residues 1 to 20 (MRGR…SQQR) and 171 to 193 (QEQG…EDDE). The span at 178 to 193 (GDSELEDGESASEDDE) shows a compositional bias: acidic residues.

Belongs to the DarP family.

The protein localises to the cytoplasm. Its function is as follows. Member of a network of 50S ribosomal subunit biogenesis factors which assembles along the 30S-50S interface, preventing incorrect 23S rRNA structures from forming. Promotes peptidyl transferase center (PTC) maturation. This is Dual-action ribosomal maturation protein DarP from Xanthomonas axonopodis pv. citri (strain 306).